Reading from the N-terminus, the 368-residue chain is uncharacterized protein (368 aa).

Disordered regions lie at residues 1–22 (MEKS…LPEK) and 282–317 (KHLG…EPPA). The span at 293–311 (KRVEKMKKAYKESKEEKAS) shows a compositional bias: basic and acidic residues.

This is an uncharacterized protein from Mus musculus (Mouse).